Consider the following 327-residue polypeptide: D-alanine--D-alanine ligase (327 aa).

The ATP-grasp domain maps to 113–312 (KRLWMTHGLA…YEDFVLQVLA (200 aa)). 139-194 (VADLGLPLIVKPAREGSSIGLTKVTAADQMRAAFDKAAALDNDVIAETFVDGAELT) is an ATP binding site. Residues aspartate 266, glutamate 279, and asparagine 281 each contribute to the Mg(2+) site.

Belongs to the D-alanine--D-alanine ligase family. The cofactor is Mg(2+). Requires Mn(2+) as cofactor.

It is found in the cytoplasm. The enzyme catalyses 2 D-alanine + ATP = D-alanyl-D-alanine + ADP + phosphate + H(+). It functions in the pathway cell wall biogenesis; peptidoglycan biosynthesis. In terms of biological role, cell wall formation. The chain is D-alanine--D-alanine ligase from Cupriavidus taiwanensis (strain DSM 17343 / BCRC 17206 / CCUG 44338 / CIP 107171 / LMG 19424 / R1) (Ralstonia taiwanensis (strain LMG 19424)).